Reading from the N-terminus, the 1476-residue chain is Membrane-associated guanylate kinase, WW and PDZ domain-containing protein 3 (1476 aa).

The 91-residue stretch at 18 to 108 folds into the PDZ 1 domain; the sequence is CAVSWAGPPG…PIRLKTVKPG (91 aa). An interaction with ADRB1 and TGFA region spans residues 18-108; it reads CAVSWAGPPG…PIRLKTVKPG (91 aa). The region spanning 116-290 is the Guanylate kinase-like domain; the sequence is RHYLSLQFQK…SSMDFRNYMM (175 aa). An ATP-binding site is contributed by 123–130; sequence FQKGSIDH. Residues 184–266 are disordered; the sequence is TYDGNFYGTP…ETREMHSETS (83 aa). Over residues 193 to 204 the composition is skewed to pro residues; it reads PKPPAEPSPFQP. Position 236 is a phosphoserine (S236). The segment covering 238–247 has biased composition (acidic residues); it reads LPEEEEDEDK. WW domains lie at 296–329 and 342–375; these read EPLP…DPRL and GELP…NPVE. The region spanning 413–495 is the PDZ 2 domain; it reads RASLKKSTMG…NQYVNLTLCR (83 aa). The interval 413–495 is interaction with PTEN; that stretch reads RASLKKSTMG…NQYVNLTLCR (83 aa). The disordered stretch occupies residues 551–575; it reads LASDRLNGPSESSEQRASLASSGSS. Positions 559–575 are enriched in polar residues; it reads PSESSEQRASLASSGSS. In terms of domain architecture, PDZ 3 spans 581 to 657; it reads TIPLIKGPKG…GADVPLLILR (77 aa). S598 is subject to Phosphoserine. Positions 664–691 are disordered; that stretch reads TKTAKTKTDTKENSGSLETINEPIPQPM. A Phosphoserine modification is found at S702. The PDZ 4 domain occupies 729–811; the sequence is DVFLRKQESG…NGHVLLTVRR (83 aa). The interaction with ADGRB1 stretch occupies residues 729 to 811; sequence DVFLRKQESG…NGHVLLTVRR (83 aa). The segment at 818–844 is disordered; the sequence is KQPEDESHQAFSQNGSPRLNRAELPTR. Residues S833 and S916 each carry the phosphoserine modification. Positions 852–939 constitute a PDZ 5 domain; the sequence is DVTLQRKENE…TVTLTVVAEE (88 aa). Positions 852–939 are interaction with LPAR2 and GRIN2B; it reads DVTLQRKENE…TVTLTVVAEE (88 aa). The interval 939-966 is disordered; sequence EEHHGPPSGTNSARQSPALQHRPMGQAQ. Over residues 946 to 956 the composition is skewed to polar residues; it reads SGTNSARQSPA. In terms of domain architecture, PDZ 6 spans 1022–1104; the sequence is PVELERGPRG…KVLLLLRPGT (83 aa). Disordered regions lie at residues 1109 to 1151 and 1168 to 1476; these read DHGD…ATED and TVQE…DKQL. Polar residues predominate over residues 1114 to 1123; sequence DTNSPSSSNV. Composition is skewed to basic and acidic residues over residues 1193 to 1211 and 1230 to 1265; these read SKKD…RLKG and RHSE…ESKG. Residues 1285 to 1304 show a composition bias toward polar residues; that stretch reads SSSPKKQQKIGGNSLSNTEG. 2 stretches are compositionally biased toward basic and acidic residues: residues 1317–1340 and 1350–1361; these read HPRD…KDLK and KSPEKKSSKVDE. A Phosphoserine modification is found at S1321. Over residues 1363–1373 the composition is skewed to polar residues; that stretch reads SLPSKKTSSTA. Residues 1419–1437 show a composition bias toward basic and acidic residues; sequence ADDHKGRESEVTDRCRERA.

Belongs to the MAGUK family. As to quaternary structure, interacts with ADRB1, ADGRB1, LPAR2/EDG4, GRIN2B, PTEN, and PTPRB. Interacts with unidentified tyrosine phosphorylated proteins. Interacts with FZD4, FZD7, TGFA and VANGL2. Interacts with DLL1. Interacts with PRRG4 (via cytoplasmic domain). Widely expressed. Colocalizes with TGFA in neurons in the cortex and dentate gyrus, as well as in ependymal cells and some astrocytes (at protein level). Present in lens epithelium.

The protein resides in the cell membrane. It is found in the cell junction. It localises to the tight junction. Its subcellular location is the nucleus. Acts as a scaffolding protein at cell-cell junctions, thereby regulating various cellular and signaling processes. Cooperates with PTEN to modulate the kinase activity of AKT1. Its interaction with PTPRB and tyrosine phosphorylated proteins suggests that it may link receptor tyrosine phosphatase with its substrates at the plasma membrane. In polarized epithelial cells, involved in efficient trafficking of TGFA to the cell surface. Regulates the ability of LPAR2 to activate ERK and RhoA pathways. Regulates the JNK signaling cascade via its interaction with FZD4 and VANGL2. The chain is Membrane-associated guanylate kinase, WW and PDZ domain-containing protein 3 (Magi3) from Mus musculus (Mouse).